A 421-amino-acid chain; its full sequence is Acyl-coenzyme A thioesterase 5 (421 aa).

Active-site charge relay system residues include S232, D326, and H360. Residues 419–421 (AKL) carry the Microbody targeting signal motif.

The protein belongs to the C/M/P thioester hydrolase family. In terms of tissue distribution, highly expressed in spleen, brain, testis and proximal and distal intestine; expressed at low level in the liver.

Its subcellular location is the peroxisome. It carries out the reaction hexadecanoyl-CoA + H2O = hexadecanoate + CoA + H(+). The catalysed reaction is decanoyl-CoA + H2O = decanoate + CoA + H(+). The enzyme catalyses octanoyl-CoA + H2O = octanoate + CoA + H(+). It catalyses the reaction dodecanoyl-CoA + H2O = dodecanoate + CoA + H(+). It carries out the reaction tetradecanoyl-CoA + H2O = tetradecanoate + CoA + H(+). The catalysed reaction is octadecanoyl-CoA + H2O = octadecanoate + CoA + H(+). The enzyme catalyses eicosanoyl-CoA + H2O = eicosanoate + CoA + H(+). It catalyses the reaction (9Z)-octadecenoyl-CoA + H2O = (9Z)-octadecenoate + CoA + H(+). It carries out the reaction (9Z,12Z)-octadecadienoyl-CoA + H2O = (9Z,12Z)-octadecadienoate + CoA + H(+). The catalysed reaction is (5Z,8Z,11Z,14Z)-eicosatetraenoyl-CoA + H2O = (5Z,8Z,11Z,14Z)-eicosatetraenoate + CoA + H(+). The enzyme catalyses (9Z)-hexadecenoyl-CoA + H2O = (9Z)-hexadecenoate + CoA + H(+). It functions in the pathway lipid metabolism; fatty acid metabolism. In terms of biological role, catalyzes the hydrolysis of acyl-CoAs into free fatty acids and coenzyme A (CoASH), regulating their respective intracellular levels. Mainly active on medium-chain acyl-CoAs. Seems to be involved in intraperoxisomal regulation of acyl-CoA levels, but not CoASH levels. May have a function in termination of beta-oxidation of fatty acids. The polypeptide is Acyl-coenzyme A thioesterase 5 (Acot5) (Mus musculus (Mouse)).